Here is a 435-residue protein sequence, read N- to C-terminus: Probable exopolygalacturonase X (435 aa).

A signal peptide spans 1-22 (MRLTHVLSHTLGLLALGATAEA). The disordered stretch occupies residues 31–55 (CSPKKPFRPLPTSSSRDKTCHVRSH). Basic and acidic residues predominate over residues 45–55 (SRDKTCHVRSH). N-linked (GlcNAc...) asparagine glycans are attached at residues Asn-93, Asn-112, Asn-128, and Asn-198. 2 PbH1 repeats span residues 199-229 (SSNVLFDGIDISGYSKSDNEAKNTDGWDTYR) and 230-251 (SNNIVIQNSVINNGDDCVSFKP). Residue Asp-244 is the Proton donor of the active site. Cys-246 and Cys-263 are oxidised to a cystine. Asn-252 and Asn-264 each carry an N-linked (GlcNAc...) asparagine glycan. Residues 253-273 (STNILVQNLHCNGSHGISVGS) form a PbH1 3 repeat. The active site involves His-267. 4 N-linked (GlcNAc...) asparagine glycosylation sites follow: Asn-291, Asn-296, Asn-328, and Asn-353. The stretch at 326–347 (VKNITYDTALIDNVDWAIEITQ) is one PbH1 4 repeat. A PbH1 5 repeat occupies 361–409 (PSSLTISDVHIKNFRGTTSGSEDPYVGTIVCSSPDTCSDIYTSNINVTS). A disulfide bridge links Cys-391 with Cys-397. Residues Asn-406 and Asn-429 are each glycosylated (N-linked (GlcNAc...) asparagine).

It belongs to the glycosyl hydrolase 28 family.

The protein resides in the secreted. It catalyses the reaction [(1-&gt;4)-alpha-D-galacturonosyl](n) + H2O = alpha-D-galacturonate + [(1-&gt;4)-alpha-D-galacturonosyl](n-1). Specific in hydrolyzing the terminal glycosidic bond of polygalacturonic acid and oligogalacturonates. This Aspergillus niger (strain ATCC MYA-4892 / CBS 513.88 / FGSC A1513) protein is Probable exopolygalacturonase X (pgaX).